The chain runs to 502 residues: UPF0371 protein CLD_0424 (502 aa).

Belongs to the UPF0371 family.

The sequence is that of UPF0371 protein CLD_0424 from Clostridium botulinum (strain Okra / Type B1).